We begin with the raw amino-acid sequence, 1170 residues long: Protein SCAR4 (1170 aa).

Disordered stretches follow at residues 180–207, 356–376, 631–674, 701–742, 783–819, 960–980, and 1026–1046; these read KLGK…EDSR, NDAD…SDDK, AAPK…PRDL, SYSG…NQTG, NQRQ…SSPL, EESK…SDTY, and HNNP…HPLE. Over residues 183–195 the composition is skewed to basic residues; the sequence is KDKRLRQSKKKGS. The span at 198–207 shows a compositional bias: basic and acidic residues; it reads TIKETPEDSR. Positions 356–365 are enriched in polar residues; it reads NDADSPASTE. Basic and acidic residues predominate over residues 366–376; the sequence is SEVKEAGSDDK. Composition is skewed to polar residues over residues 640-668, 701-716, 783-818, and 967-980; these read SQDG…TLMS, SYSG…IVSD, NQRQ…QSSP, and EQSP…SDTY. Positions 1105-1123 constitute a WH2 domain; that stretch reads ENDSLLEIIRSKSFNLRPA.

It belongs to the SCAR/WAVE family. As to quaternary structure, interacts with SPK1. Expressed in expanding cotyledons, expanding leaves and expanding siliques containing developing embryos. Detected in unopened flower buds and in the expanding tip region of roots. Reduced expression in mature leaves.

The protein resides in the cytoplasm. The protein localises to the cytoskeleton. Involved in regulation of actin and microtubule organization. Part of a WAVE complex that activates the Arp2/3 complex. Regulates trichome branch positioning and expansion. This chain is Protein SCAR4 (SCAR4), found in Arabidopsis thaliana (Mouse-ear cress).